The following is a 134-amino-acid chain: Replication enhancer protein (134 aa).

It belongs to the geminiviridae replication enhancer protein family. In terms of assembly, homooligomer. Interacts with the replication-associated protein (REP). Interacts with host proliferating cell nuclear antigen (PCNA). Interacts with host retinoblastoma-related protein 1 (RBR1), and may thereby deregulate the host cell cycle. Oligomerization and interaction with PCNA are necessary for optimal replication enhancement.

In terms of biological role, increases viral DNA accumulation. Enhances infectivity and symptom expression. This is Replication enhancer protein from Tomato pseudo-curly top virus (TPCTV).